We begin with the raw amino-acid sequence, 306 residues long: Acetyl-coenzyme A carboxylase carboxyl transferase subunit beta (306 aa).

The 270-residue stretch at 25 to 294 (LWIKDPTSGE…VVTPSPPSPT (270 aa)) folds into the CoA carboxyltransferase N-terminal domain. A disordered region spans residues 284–306 (AVVTPSPPSPTDSQTSLSKTKAA).

This sequence belongs to the AccD/PCCB family. In terms of assembly, acetyl-CoA carboxylase is a heterohexamer composed of biotin carboxyl carrier protein (AccB), biotin carboxylase (AccC) and two subunits each of ACCase subunit alpha (AccA) and ACCase subunit beta (AccD).

The protein localises to the cytoplasm. It catalyses the reaction N(6)-carboxybiotinyl-L-lysyl-[protein] + acetyl-CoA = N(6)-biotinyl-L-lysyl-[protein] + malonyl-CoA. It participates in lipid metabolism; malonyl-CoA biosynthesis; malonyl-CoA from acetyl-CoA: step 1/1. Its function is as follows. Component of the acetyl coenzyme A carboxylase (ACC) complex. Biotin carboxylase (BC) catalyzes the carboxylation of biotin on its carrier protein (BCCP) and then the CO(2) group is transferred by the transcarboxylase to acetyl-CoA to form malonyl-CoA. The chain is Acetyl-coenzyme A carboxylase carboxyl transferase subunit beta from Bartonella tribocorum (strain CIP 105476 / IBS 506).